The sequence spans 804 residues: Chondroitin sulfate synthase mig-22 (804 aa).

Topologically, residues 1 to 6 (MVGGGR) are cytoplasmic. Residues 7-27 (TGIHLLLGFLIGAALALFFFS) form a helical; Signal-anchor for type II membrane protein membrane-spanning segment. The Lumenal portion of the chain corresponds to 28–804 (STPSIDLTSS…QLAKLLFHEK (777 aa)). 3 N-linked (GlcNAc...) asparagine glycosylation sites follow: asparagine 123, asparagine 172, and asparagine 268.

The protein belongs to the chondroitin N-acetylgalactosaminyltransferase family. Interacts with sqv-5. A divalent metal cation is required as a cofactor. In terms of tissue distribution, expressed in seam cells, the vulval epithelium and in oocytes (at protein level).

It is found in the golgi apparatus. The protein resides in the golgi stack membrane. It carries out the reaction 3-O-(beta-D-GlcA-(1-&gt;3)-beta-D-GalNAc-(1-&gt;4)-beta-D-GlcA-(1-&gt;3)-beta-D-Gal-(1-&gt;3)-beta-D-Gal-(1-&gt;4)-beta-D-Xyl)-L-seryl-[protein] + UDP-N-acetyl-alpha-D-galactosamine = 3-O-(beta-D-GalNAc-(1-&gt;4)-beta-D-GlcA-(1-&gt;3)-beta-D-GalNAc-(1-&gt;4)-beta-D-GlcA-(1-&gt;3)-beta-D-Gal-(1-&gt;3)-beta-D-Gal-(1-&gt;4)-beta-D-Xyl)-L-seryl-[protein] + UDP + H(+). The catalysed reaction is 3-O-{beta-D-GlcA-(1-&gt;3)-[beta-D-GalNAc-(1-&gt;4)-beta-D-GlcA-(1-&gt;3)](n)-beta-D-GalNAc-(1-&gt;4)-beta-D-GlcA-(1-&gt;3)-beta-D-Gal-(1-&gt;3)-beta-D-Gal-(1-&gt;4)-beta-D-Xyl}-L-seryl-[protein] + UDP-N-acetyl-alpha-D-galactosamine = 3-O-{[beta-D-GalNAc-(1-&gt;4)-beta-D-GlcA-(1-&gt;3)](n+1)-beta-D-GalNAc-(1-&gt;4)-beta-D-GlcA-(1-&gt;3)-beta-D-Gal-(1-&gt;3)-beta-D-Gal-(1-&gt;4)-beta-D-Xyl}-L-seryl-[protein] + UDP + H(+). The enzyme catalyses 3-O-(beta-D-GalNAc-(1-&gt;4)-beta-D-GlcA-(1-&gt;3)-beta-D-Gal-(1-&gt;3)-beta-D-Gal-(1-&gt;4)-beta-D-Xyl)-L-seryl-[protein] + UDP-alpha-D-glucuronate = 3-O-(beta-D-GlcA-(1-&gt;3)-beta-D-GalNAc-(1-&gt;4)-beta-D-GlcA-(1-&gt;3)-beta-D-Gal-(1-&gt;3)-beta-D-Gal-(1-&gt;4)-beta-D-Xyl)-L-seryl-[protein] + UDP + H(+). It catalyses the reaction 3-O-{[beta-D-GalNAc-(1-&gt;4)-beta-D-GlcA-(1-&gt;3)](n)-beta-D-GalNAc-(1-&gt;4)-beta-D-GlcA-(1-&gt;3)-beta-D-Gal-(1-&gt;3)-beta-D-Gal-(1-&gt;4)-beta-D-Xyl}-L-seryl-[protein] + UDP-alpha-D-glucuronate = 3-O-{beta-D-GlcA-(1-&gt;3)-[beta-D-GalNAc-(1-&gt;4)-beta-D-GlcA-(1-&gt;3)](n)-beta-D-GalNAc-(1-&gt;4)-beta-D-GlcA-(1-&gt;3)-beta-D-Gal-(1-&gt;3)-beta-D-Gal-(1-&gt;4)-beta-D-Xyl}-L-seryl-[protein] + UDP + H(+). Has both beta-1,3-glucuronic acid and beta-1,4-N-acetylgalactosamine transferase activity. Transfers glucuronic acid (GlcUA) from UDP-GlcUA and N-acetylgalactosamine (GalNAc) from UDP-GalNAc to the non-reducing end of the elongating chondroitin polymer. Required together with sqv-5 for the biosynthesis of chondroitin. Chondroitin is involved in organogenesis of the vulva, maturation of the gonad, and neural development. May have a specific role in unc-6/netrin-mediated dorsal guidance of gonadal distal tip cells. Glycosyltransferase activity is weak. The sequence is that of Chondroitin sulfate synthase mig-22 (mig-22) from Caenorhabditis elegans.